Reading from the N-terminus, the 50-residue chain is Monellin chain B (50 aa).

Heterodimer of an A chain and a B chain.

In terms of biological role, taste-modifying protein; intensely sweet-tasting protein. This chain is Monellin chain B, found in Dioscoreophyllum cumminsii (Serendipity berry).